The chain runs to 115 residues: Hydrogenase maturation factor HypA (115 aa).

Histidine 2 is a Ni(2+) binding site. 4 residues coordinate Zn(2+): cysteine 73, cysteine 76, cysteine 89, and cysteine 92.

Belongs to the HypA/HybF family.

Involved in the maturation of [NiFe] hydrogenases. Required for nickel insertion into the metal center of the hydrogenase. This Nitrosospira multiformis (strain ATCC 25196 / NCIMB 11849 / C 71) protein is Hydrogenase maturation factor HypA.